The following is an 86-amino-acid chain: MDPVDPNQEPWNHPGSQPRTACNNCYCKKCCYHCQLCFLKKGLGIYYGRKKRRQRRGTPKSLQDHQTLIPKQPLSRTSGDPTGPEK.

An interaction with human CREBBP region spans residues 1–24; it reads MDPVDPNQEPWNHPGSQPRTACNN. The interval 1-48 is transactivation; the sequence is MDPVDPNQEPWNHPGSQPRTACNNCYCKKCCYHCQLCFLKKGLGIYYG. 3 residues coordinate Zn(2+): Cys22, Cys25, and Cys27. The cysteine-rich stretch occupies residues 22–37; the sequence is CNNCYCKKCCYHCQLC. Lys28 carries the post-translational modification N6-acetyllysine; by host PCAF. Positions 30, 33, 34, and 37 each coordinate Zn(2+). The interval 38-48 is core; the sequence is FLKKGLGIYYG. Basic residues predominate over residues 48–58; that stretch reads GRKKRRQRRGT. The segment at 48-86 is disordered; it reads GRKKRRQRRGTPKSLQDHQTLIPKQPLSRTSGDPTGPEK. A Nuclear localization signal, RNA-binding (TAR), and protein transduction motif is present at residues 49–57; the sequence is RKKRRQRRG. The interaction with the host capping enzyme RNGTT stretch occupies residues 49–86; the sequence is RKKRRQRRGTPKSLQDHQTLIPKQPLSRTSGDPTGPEK. An N6-acetyllysine; by host EP300 and GCN5L2 mark is found at Lys50 and Lys51. Asymmetric dimethylarginine; by host PRMT6 occurs at positions 52 and 53. A Glycyl lysine isopeptide (Lys-Gly) (interchain with G-Cter in ubiquitin) cross-link involves residue Lys71.

The protein belongs to the lentiviruses Tat family. In terms of assembly, interacts with host CCNT1. Associates with the P-TEFb complex composed at least of Tat, P-TEFb (CDK9 and CCNT1), TAR RNA, RNA Pol II. Recruits the HATs CREBBP, TAF1/TFIID, EP300, PCAF and GCN5L2. Interacts with host KAT5/Tip60; this interaction targets the latter to degradation. Interacts with the host deacetylase SIRT1. Interacts with host capping enzyme RNGTT; this interaction stimulates RNGTT. Binds to host KDR, and to the host integrins ITGAV/ITGB3 and ITGA5/ITGB1. Interacts with host KPNB1/importin beta-1 without previous binding to KPNA1/importin alpha-1. Interacts with EIF2AK2. Interacts with host nucleosome assembly protein NAP1L1; this interaction may be required for the transport of Tat within the nucleus, since the two proteins interact at the nuclear rim. Interacts with host C1QBP/SF2P32; this interaction involves lysine-acetylated Tat. Interacts with the host chemokine receptors CCR2, CCR3 and CXCR4. Interacts with host DPP4/CD26; this interaction may trigger an anti-proliferative effect. Interacts with host LDLR. Interacts with the host extracellular matrix metalloproteinase MMP1. Interacts with host PRMT6; this interaction mediates Tat's methylation. Interacts with, and is ubiquitinated by MDM2/Hdm2. Interacts with host PSMC3 and HTATIP2. Interacts with STAB1; this interaction may overcome SATB1-mediated repression of IL2 and IL2RA (interleukin) in T cells by binding to the same domain than HDAC1. Interacts (when acetylated) with human CDK13, thereby increasing HIV-1 mRNA splicing and promoting the production of the doubly spliced HIV-1 protein Nef. Interacts with host TBP; this interaction modulates the activity of transcriptional pre-initiation complex. Interacts with host RELA. Interacts with host PLSCR1; this interaction negatively regulates Tat transactivation activity by altering its subcellular distribution. Asymmetrical arginine methylation by host PRMT6 seems to diminish the transactivation capacity of Tat and affects the interaction with host CCNT1. In terms of processing, acetylation by EP300, CREBBP, GCN5L2/GCN5 and PCAF regulates the transactivation activity of Tat. EP300-mediated acetylation of Lys-50 promotes dissociation of Tat from the TAR RNA through the competitive binding to PCAF's bromodomain. In addition, the non-acetylated Tat's N-terminus can also interact with PCAF. PCAF-mediated acetylation of Lys-28 enhances Tat's binding to CCNT1. Lys-50 is deacetylated by SIRT1. Post-translationally, polyubiquitination by host MDM2 does not target Tat to degradation, but activates its transactivation function and fosters interaction with CCNT1 and TAR RNA. Phosphorylated by EIF2AK2 on serine and threonine residues adjacent to the basic region important for TAR RNA binding and function. Phosphorylation of Tat by EIF2AK2 is dependent on the prior activation of EIF2AK2 by dsRNA.

Its subcellular location is the host nucleus. It is found in the host nucleolus. The protein resides in the host cytoplasm. It localises to the secreted. In terms of biological role, transcriptional activator that increases RNA Pol II processivity, thereby increasing the level of full-length viral transcripts. Recognizes a hairpin structure at the 5'-LTR of the nascent viral mRNAs referred to as the transactivation responsive RNA element (TAR) and recruits the cyclin T1-CDK9 complex (P-TEFb complex) that will in turn hyperphosphorylate the RNA polymerase II to allow efficient elongation. The CDK9 component of P-TEFb and other Tat-activated kinases hyperphosphorylate the C-terminus of RNA Pol II that becomes stabilized and much more processive. Other factors such as HTATSF1/Tat-SF1, SUPT5H/SPT5, and HTATIP2 are also important for Tat's function. Besides its effect on RNA Pol II processivity, Tat induces chromatin remodeling of proviral genes by recruiting the histone acetyltransferases (HATs) CREBBP, EP300 and PCAF to the chromatin. This also contributes to the increase in proviral transcription rate, especially when the provirus integrates in transcriptionally silent region of the host genome. To ensure maximal activation of the LTR, Tat mediates nuclear translocation of NF-kappa-B by interacting with host RELA. Through its interaction with host TBP, Tat may also modulate transcription initiation. Tat can reactivate a latently infected cell by penetrating in it and transactivating its LTR promoter. In the cytoplasm, Tat is thought to act as a translational activator of HIV-1 mRNAs. Extracellular circulating Tat can be endocytosed by surrounding uninfected cells via the binding to several surface receptors such as CD26, CXCR4, heparan sulfate proteoglycans (HSPG) or LDLR. Neurons are rarely infected, but they internalize Tat via their LDLR. Through its interaction with nuclear HATs, Tat is potentially able to control the acetylation-dependent cellular gene expression. Modulates the expression of many cellular genes involved in cell survival, proliferation or in coding for cytokines or cytokine receptors. Tat plays a role in T-cell and neurons apoptosis. Tat induced neurotoxicity and apoptosis probably contribute to neuroAIDS. Circulating Tat also acts as a chemokine-like and/or growth factor-like molecule that binds to specific receptors on the surface of the cells, affecting many cellular pathways. In the vascular system, Tat binds to ITGAV/ITGB3 and ITGA5/ITGB1 integrins dimers at the surface of endothelial cells and competes with bFGF for heparin-binding sites, leading to an excess of soluble bFGF. The chain is Protein Tat from Human immunodeficiency virus type 1 group M subtype H (isolate VI991) (HIV-1).